The primary structure comprises 147 residues: D-aminoacyl-tRNA deacylase (147 aa).

Residues 136-137 carry the Gly-cisPro motif, important for rejection of L-amino acids motif; that stretch reads GP.

This sequence belongs to the DTD family. As to quaternary structure, homodimer.

Its subcellular location is the cytoplasm. It catalyses the reaction glycyl-tRNA(Ala) + H2O = tRNA(Ala) + glycine + H(+). It carries out the reaction a D-aminoacyl-tRNA + H2O = a tRNA + a D-alpha-amino acid + H(+). An aminoacyl-tRNA editing enzyme that deacylates mischarged D-aminoacyl-tRNAs. Also deacylates mischarged glycyl-tRNA(Ala), protecting cells against glycine mischarging by AlaRS. Acts via tRNA-based rather than protein-based catalysis; rejects L-amino acids rather than detecting D-amino acids in the active site. By recycling D-aminoacyl-tRNA to D-amino acids and free tRNA molecules, this enzyme counteracts the toxicity associated with the formation of D-aminoacyl-tRNA entities in vivo and helps enforce protein L-homochirality. This is D-aminoacyl-tRNA deacylase from Streptococcus dysgalactiae subsp. equisimilis (Streptococcus equisimilis).